A 196-amino-acid polypeptide reads, in one-letter code: Mediator of RNA polymerase II transcription subunit 21 (196 aa).

The tract at residues Lys52–Pro111 is disordered. Composition is skewed to low complexity over residues Ser65–Ala76 and Gln87–Gln98. Positions Ser144–Leu174 form a coiled coil.

The protein belongs to the Mediator complex subunit 21 family. In terms of assembly, component of the Mediator complex.

The protein localises to the nucleus. Component of the Mediator complex, a coactivator involved in the regulated transcription of nearly all RNA polymerase II-dependent genes. Mediator functions as a bridge to convey information from gene-specific regulatory proteins to the basal RNA polymerase II transcription machinery. Mediator is recruited to promoters by direct interactions with regulatory proteins and serves as a scaffold for the assembly of a functional preinitiation complex with RNA polymerase II and the general transcription factors. The chain is Mediator of RNA polymerase II transcription subunit 21 (srb7) from Aspergillus niger (strain ATCC MYA-4892 / CBS 513.88 / FGSC A1513).